A 114-amino-acid chain; its full sequence is T cell receptor beta variable 27 (114 aa).

A signal peptide spans 1–21; it reads MGPQLLGYVVLCLLGAGPLEA. The Ig-like domain maps to 22–114; the sequence is QVTQNPRYLI…TSLYFCASSL (93 aa). A disulfide bond links C42 and C110. N-linked (GlcNAc...) asparagine glycosylation is present at N103.

Alpha-beta TR is a heterodimer composed of an alpha and beta chain; disulfide-linked. The alpha-beta TR is associated with the transmembrane signaling CD3 coreceptor proteins to form the TR-CD3 (TcR or TCR). The assembly of alpha-beta TR heterodimers with CD3 occurs in the endoplasmic reticulum where a single alpha-beta TR heterodimer associates with one CD3D-CD3E heterodimer, one CD3G-CD3E heterodimer and one CD247 homodimer forming a stable octameric structure. CD3D-CD3E and CD3G-CD3E heterodimers preferentially associate with TR alpha and TR beta chains, respectively. The association of the CD247 homodimer is the last step of TcR assembly in the endoplasmic reticulum and is required for transport to the cell surface.

It localises to the cell membrane. V region of the variable domain of T cell receptor (TR) beta chain that participates in the antigen recognition. Alpha-beta T cell receptors are antigen specific receptors which are essential to the immune response and are present on the cell surface of T lymphocytes. Recognize peptide-major histocompatibility (MH) (pMH) complexes that are displayed by antigen presenting cells (APC), a prerequisite for efficient T cell adaptive immunity against pathogens. Binding of alpha-beta TR to pMH complex initiates TR-CD3 clustering on the cell surface and intracellular activation of LCK that phosphorylates the ITAM motifs of CD3G, CD3D, CD3E and CD247 enabling the recruitment of ZAP70. In turn ZAP70 phosphorylates LAT, which recruits numerous signaling molecules to form the LAT signalosome. The LAT signalosome propagates signal branching to three major signaling pathways, the calcium, the mitogen-activated protein kinase (MAPK) kinase and the nuclear factor NF-kappa-B (NF-kB) pathways, leading to the mobilization of transcription factors that are critical for gene expression and essential for T cell growth and differentiation. The T cell repertoire is generated in the thymus, by V-(D)-J rearrangement. This repertoire is then shaped by intrathymic selection events to generate a peripheral T cell pool of self-MH restricted, non-autoaggressive T cells. Post-thymic interaction of alpha-beta TR with the pMH complexes shapes TR structural and functional avidity. In Homo sapiens (Human), this protein is T cell receptor beta variable 27.